We begin with the raw amino-acid sequence, 300 residues long: DDRGK domain-containing protein 1 (300 aa).

Topologically, residues 1–2 are lumenal; sequence MD. Residues 3–23 traverse the membrane as a helical segment; that stretch reads VVLYIAAAAILLVLIVFSVKI. Residues 24–300 are Cytoplasmic-facing; sequence RGRTQDADVE…NLTPDIHSSA (277 aa). Positions 28-173 are disordered; that stretch reads QDADVEDHQN…RVKEEQERRE (146 aa). The span at 78 to 90 shows a compositional bias: acidic residues; sequence NEDSPVEADEDEE. Residues 112–173 are compositionally biased toward basic and acidic residues; sequence KLEEKQARKA…RVKEEQERRE (62 aa). The UFM1-interacting motif (UFIM) motif lies at 183 to 197; sequence SFIIEDQGEAEELTE. A PCI domain is found at 217–261; it reads VLLEDLASQFGLRTQDAIARLQDLIADGSLTGVIDDRGKFIFITP.

It belongs to the DDRGK1 family. As to quaternary structure, component of the UFM1 ribosome E3 ligase (UREL) complex, composed of ufl1, ddrgk1 and cdk5rap3.

Its subcellular location is the endoplasmic reticulum membrane. Component of the UFM1 ribosome E3 ligase (UREL) complex, a multiprotein complex that catalyzes ufmylation of endoplasmic reticulum-docked proteins. The UREL complex plays a key role in ribosome recycling by mediating mono-ufmylation of the RPL26/uL24 subunit of the 60S ribosome following ribosome dissociation: ufmylation weakens the junction between post-termination 60S subunits and SEC61 translocons, promoting release and recycling of the large ribosomal subunit from the endoplasmic reticulum membrane. Ufmylation of RPL26/uL24 and subsequent 60S ribosome recycling either take place after normal termination of translation or after ribosome stalling during cotranslational translocation at the endoplasmic reticulum. Within the UREL complex, DDRGK1 tethers the complex to the endoplasmic reticulum membrane to restrict its activity to endoplasmic reticulum-docked ribosomes and acts as an ufmylation 'reader': following RPL26/uL24 ufmylation, DDRGK1 specifically binds to ufmylated RPL26/uL24 via its UFIM motif, resulting in stable association between the 60S ribosome and the UREL complex, followed by dissociation of the 60S ribosome subunit from the endoplasmic reticulum membrane. The UREL complex is also involved in reticulophagy in response to endoplasmic reticulum stress by promoting ufmylation of proteins such as CYB5R3 and RPN1, thereby promoting lysosomal degradation of ufmylated proteins. Plays a role in cartilage development through sox9, inhibiting the ubiquitin-mediated proteasomal degradation of this transcriptional regulator. Required for stabilization and ufmylation of ATG9A. This is DDRGK domain-containing protein 1 from Danio rerio (Zebrafish).